The primary structure comprises 652 residues: Acetolactate synthase 3, chloroplastic (652 aa).

Residues 1–20 show a composition bias toward polar residues; it reads MAAATSSSPISLTAKPSSKS. A disordered region spans residues 1–23; that stretch reads MAAATSSSPISLTAKPSSKSPLP. The transit peptide at 1-69 directs the protein to the chloroplast; it reads MAAATSSSPI…PEKTDKIKTF (69 aa). E126 contacts thiamine diphosphate. FAD is bound by residues R228, 334 to 355, and 377 to 396; these read HGTVYANYAVEHSDLLLAFGVR and DIDSAEIGKNKTPHVSVCGD. The segment at 469–549 is thiamine pyrophosphate binding; the sequence is QHQMWAAQFY…VKILLLNNQH (81 aa). The Mg(2+) site is built by D520 and N547.

Belongs to the TPP enzyme family. The cofactor is Mg(2+). Requires thiamine diphosphate as cofactor.

The protein resides in the plastid. Its subcellular location is the chloroplast. The enzyme catalyses 2 pyruvate + H(+) = (2S)-2-acetolactate + CO2. Its pathway is amino-acid biosynthesis; L-isoleucine biosynthesis; L-isoleucine from 2-oxobutanoate: step 1/4. It participates in amino-acid biosynthesis; L-valine biosynthesis; L-valine from pyruvate: step 1/4. The protein is Acetolactate synthase 3, chloroplastic of Brassica napus (Rape).